The sequence spans 443 residues: Xaa-Pro dipeptidase (443 aa).

Residues Asp246, Asp257, His339, Glu384, and Glu423 each coordinate Mn(2+).

The protein belongs to the peptidase M24B family. Bacterial-type prolidase subfamily. The cofactor is Mn(2+).

It carries out the reaction Xaa-L-Pro dipeptide + H2O = an L-alpha-amino acid + L-proline. In terms of biological role, splits dipeptides with a prolyl residue in the C-terminal position. The chain is Xaa-Pro dipeptidase from Shigella flexneri serotype 5b (strain 8401).